The primary structure comprises 265 residues: Glycosylphosphatidylinositol anchor biosynthesis protein 11 (265 aa).

2 helical membrane-spanning segments follow: residues 49-69 and 79-99; these read LLVV…SGLT and GFLT…INLL. N-linked (GlcNAc...) asparagine glycans are attached at residues Asn111 and Asn112. Helical transmembrane passes span 137–157, 166–186, 209–229, and 240–260; these read IFVS…MGAP, LYLS…LSNL, ILSS…PIPL, and ITLL…SLIV.

Belongs to the PIGF family.

It is found in the endoplasmic reticulum membrane. The protein operates within glycolipid biosynthesis; glycosylphosphatidylinositol-anchor biosynthesis. Functionally, acts in the GPI biosynthetic pathway between GlcNAc-PI synthesis and GPI transfer to protein. The chain is Glycosylphosphatidylinositol anchor biosynthesis protein 11 (GPI11) from Candida albicans (strain SC5314 / ATCC MYA-2876) (Yeast).